Reading from the N-terminus, the 101-residue chain is MIKEIVKESEKGILIDIEVTTNAKKNEIGKINEWRKRIEIRIKEQPIEGKANKAIIKFLKGIFKSEISINSGTTSSQKTVLIPDKTKEDVVKILKKEIKSI.

The protein belongs to the UPF0235 family.

The sequence is that of UPF0235 protein MmarC6_1603 from Methanococcus maripaludis (strain C6 / ATCC BAA-1332).